Consider the following 289-residue polypeptide: Thymidylate synthase (289 aa).

DUMP contacts are provided by residues Arg26 and 151-152 (RR). The active-site Nucleophile is the Cys171. DUMP-binding positions include 191 to 194 (RSGD), Asn202, and 232 to 234 (HVY). Asp194 is a (6R)-5,10-methylene-5,6,7,8-tetrahydrofolate binding site. Ala288 contacts (6R)-5,10-methylene-5,6,7,8-tetrahydrofolate.

This sequence belongs to the thymidylate synthase family. As to quaternary structure, homodimer.

The enzyme catalyses dUMP + (6R)-5,10-methylene-5,6,7,8-tetrahydrofolate = 7,8-dihydrofolate + dTMP. It participates in pyrimidine metabolism; dTTP biosynthesis. The protein is Thymidylate synthase of Equus caballus (Horse).